The sequence spans 328 residues: uncharacterized protein (328 aa).

The SIS domain occupies 37-179; that stretch reads LTERLLCHQG…AMTVLRCRKI (143 aa). 52-57 lines the ATP pocket; sequence GIGKSG. 2 consecutive CBS domains span residues 205-264 and 273-328; these read LSPR…GGAI and MTRK…AGLL.

This sequence belongs to the SIS family. GutQ/KpsF subfamily.

This is an uncharacterized protein from Chlamydia muridarum (strain MoPn / Nigg).